Consider the following 576-residue polypeptide: Apolipoprotein N-acyltransferase 1 (576 aa).

Transmembrane regions (helical) follow at residues 15 to 35 (LILCFGIGIGTVFGLSPFSFF), 38 to 58 (GVFASISCIFLFFSLNRTSIW), 60 to 80 (AFLWLLILSQILNFTAFYWIP), 92 to 112 (FVSILFFFLYGLISHLKFFLF), 128 to 148 (YILLIFPAAGTLSDMITFQIF), 168 to 188 (ICGVYGLSFLLLFISSTFLIL), and 204 to 224 (IASLICITFIYGFGLYRIGYI). The 303-residue stretch at 236–538 (LSVLMIQPDT…TGTRAFSIRL (303 aa)) folds into the CN hydrolase domain. Residue glutamate 285 is the Proton acceptor of the active site. Lysine 355 is an active-site residue. Catalysis depends on cysteine 446, which acts as the Nucleophile. The chain crosses the membrane as a helical span at residues 549–569 (FGNSFLWIFCILILISRLIFV).

This sequence belongs to the CN hydrolase family. Apolipoprotein N-acyltransferase subfamily.

Its subcellular location is the cell inner membrane. It catalyses the reaction N-terminal S-1,2-diacyl-sn-glyceryl-L-cysteinyl-[lipoprotein] + a glycerophospholipid = N-acyl-S-1,2-diacyl-sn-glyceryl-L-cysteinyl-[lipoprotein] + a 2-acyl-sn-glycero-3-phospholipid + H(+). It functions in the pathway protein modification; lipoprotein biosynthesis (N-acyl transfer). Its function is as follows. Catalyzes the phospholipid dependent N-acylation of the N-terminal cysteine of apolipoprotein, the last step in lipoprotein maturation. In Leptospira interrogans serogroup Icterohaemorrhagiae serovar Lai (strain 56601), this protein is Apolipoprotein N-acyltransferase 1.